A 225-amino-acid chain; its full sequence is Protein-L-isoaspartate O-methyltransferase (225 aa).

Residues Ala57 to Ser60, His65, Ser89, Glu110 to His111, Asp142 to Gly143, Thr216, and Gln221 contribute to the S-adenosyl-L-homocysteine site. Residue Ser60 is part of the active site.

Belongs to the methyltransferase superfamily. L-isoaspartyl/D-aspartyl protein methyltransferase family. As to quaternary structure, monomer.

Its subcellular location is the cytoplasm. It localises to the cytosol. It carries out the reaction [protein]-L-isoaspartate + S-adenosyl-L-methionine = [protein]-L-isoaspartate alpha-methyl ester + S-adenosyl-L-homocysteine. Initiates the repair of damaged proteins by catalyzing methyl esterification of L-isoaspartyl and D-aspartyl residues produced by spontaneous isomerization and racemization of L-aspartyl and L-asparaginyl residues in aging peptides and proteins. This is Protein-L-isoaspartate O-methyltransferase (pcm-1) from Caenorhabditis elegans.